A 335-amino-acid polypeptide reads, in one-letter code: 2,4-dienoyl-CoA reductase [(3E)-enoyl-CoA-producing], mitochondrial (335 aa).

The N-terminal 34 residues, 1–34, are a transit peptide targeting the mitochondrion; it reads MALLGRAFFAGVSRLPCDPGPQRFFSFGTKTLYQ. An N6-acetyllysine; alternate mark is found at lysine 42 and lysine 49. Residues lysine 42 and lysine 49 each carry the N6-succinyllysine; alternate modification. 66 to 71 is a binding site for NADP(+); it reads GGGTGL. At threonine 69 the chain carries Phosphothreonine. Lysine 73 bears the N6-succinyllysine mark. Residue arginine 91 participates in NADP(+) binding. Arginine 91 contributes to the substrate binding site. Residues lysine 97 and lysine 106 each carry the N6-acetyllysine; alternate modification. 2 positions are modified to N6-succinyllysine; alternate: lysine 97 and lysine 106. Aspartate 117 is a binding site for NADP(+). Positions 119 and 149 each coordinate substrate. The Proton acceptor role is filled by tyrosine 199. NADP(+)-binding positions include lysine 214 and 240–243; that span reads PGPI. N6-acetyllysine; alternate is present on lysine 244. An N6-succinyllysine; alternate modification is found at lysine 244. Residue arginine 251 coordinates substrate. At lysine 260 the chain carries N6-acetyllysine; alternate. N6-succinyllysine; alternate is present on lysine 260. Lysine 315 bears the N6-acetyllysine mark. At lysine 319 the chain carries N6-acetyllysine; alternate. At lysine 319 the chain carries N6-succinyllysine; alternate.

This sequence belongs to the short-chain dehydrogenases/reductases (SDR) family. 2,4-dienoyl-CoA reductase subfamily. In terms of assembly, homotetramer.

It localises to the mitochondrion. It carries out the reaction a (2E,4E)-dienoyl-CoA + NADPH + H(+) = a 4,5-saturated-(3E)-enoyl-CoA + NADP(+). The catalysed reaction is a (2E,4Z)-dienoyl-CoA + NADPH + H(+) = a 4,5-saturated-(3E)-enoyl-CoA + NADP(+). It catalyses the reaction (2E,4E)-hexadienoyl-CoA + NADPH + H(+) = (3E)-hexenoyl-CoA + NADP(+). Auxiliary enzyme of beta-oxidation. It participates in the metabolism of unsaturated fatty enoyl-CoA esters having double bonds in both even- and odd-numbered positions in mitochondria. Catalyzes the NADP-dependent reduction of 2,4-dienoyl-CoA to yield trans-3-enoyl-CoA. This is 2,4-dienoyl-CoA reductase [(3E)-enoyl-CoA-producing], mitochondrial (Decr1) from Mus musculus (Mouse).